Reading from the N-terminus, the 209-residue chain is Small ribosomal subunit protein uS4 (209 aa).

The S4 RNA-binding domain maps to Arg-98–Asn-164.

The protein belongs to the universal ribosomal protein uS4 family. Part of the 30S ribosomal subunit. Contacts protein S5. The interaction surface between S4 and S5 is involved in control of translational fidelity.

One of the primary rRNA binding proteins, it binds directly to 16S rRNA where it nucleates assembly of the body of the 30S subunit. In terms of biological role, with S5 and S12 plays an important role in translational accuracy. The polypeptide is Small ribosomal subunit protein uS4 (Thermosipho africanus (strain TCF52B)).